Here is a 108-residue protein sequence, read N- to C-terminus: uncharacterized protein (108 aa).

This is an uncharacterized protein from Enterobacteria phage T4 (Bacteriophage T4).